Consider the following 154-residue polypeptide: ATP synthase subunit b (154 aa).

Residues 5–27 form a helical membrane-spanning segment; it reads LLGQAIAFTLFVWFCMKYVWPPI.

It belongs to the ATPase B chain family. In terms of assembly, F-type ATPases have 2 components, F(1) - the catalytic core - and F(0) - the membrane proton channel. F(1) has five subunits: alpha(3), beta(3), gamma(1), delta(1), epsilon(1). F(0) has three main subunits: a(1), b(2) and c(10-14). The alpha and beta chains form an alternating ring which encloses part of the gamma chain. F(1) is attached to F(0) by a central stalk formed by the gamma and epsilon chains, while a peripheral stalk is formed by the delta and b chains.

The protein resides in the cell inner membrane. Functionally, f(1)F(0) ATP synthase produces ATP from ADP in the presence of a proton or sodium gradient. F-type ATPases consist of two structural domains, F(1) containing the extramembraneous catalytic core and F(0) containing the membrane proton channel, linked together by a central stalk and a peripheral stalk. During catalysis, ATP synthesis in the catalytic domain of F(1) is coupled via a rotary mechanism of the central stalk subunits to proton translocation. In terms of biological role, component of the F(0) channel, it forms part of the peripheral stalk, linking F(1) to F(0). The protein is ATP synthase subunit b of Aliivibrio fischeri (strain ATCC 700601 / ES114) (Vibrio fischeri).